We begin with the raw amino-acid sequence, 444 residues long: N-succinylarginine dihydrolase (444 aa).

Residues 19–28 (AGLSFGNVAS), Asn-110, and 137–138 (HR) each bind substrate. The active site involves Glu-174. Residue Arg-214 coordinates substrate. His-250 is a catalytic residue. Positions 252 and 362 each coordinate substrate. Residue Cys-368 is the Nucleophile of the active site.

The protein belongs to the succinylarginine dihydrolase family. In terms of assembly, homodimer.

It carries out the reaction N(2)-succinyl-L-arginine + 2 H2O + 2 H(+) = N(2)-succinyl-L-ornithine + 2 NH4(+) + CO2. The protein operates within amino-acid degradation; L-arginine degradation via AST pathway; L-glutamate and succinate from L-arginine: step 2/5. Its function is as follows. Catalyzes the hydrolysis of N(2)-succinylarginine into N(2)-succinylornithine, ammonia and CO(2). The polypeptide is N-succinylarginine dihydrolase (Shewanella sp. (strain ANA-3)).